A 440-amino-acid chain; its full sequence is Elongation factor 1-gamma (440 aa).

Ala2 is subject to N-acetylalanine. The region spanning Ala2–Ser87 is the GST N-terminal domain. A GST C-terminal domain is found at Thr88–Phe216. Residues Lys147 and Lys212 each carry the N6-acetyllysine modification. Basic and acidic residues predominate over residues Phe221–Ala257. The tract at residues Phe221 to Asp267 is disordered. Residue Lys256 forms a Glycyl lysine isopeptide (Lys-Gly) (interchain with G-Cter in SUMO1) linkage. The EF-1-gamma C-terminal domain occupies Ala279–Lys440. Lys288 is covalently cross-linked (Glycyl lysine isopeptide (Lys-Gly) (interchain with G-Cter in SUMO2)). Lys404 carries the N6-acetyllysine modification. Residue Lys437 is modified to N6-acetyllysine; alternate. Position 437 is an N6-malonyllysine; alternate (Lys437).

In terms of assembly, EF-1 is composed of four subunits: alpha, beta, delta, and gamma.

Its function is as follows. Probably plays a role in anchoring the complex to other cellular components. This chain is Elongation factor 1-gamma (EEF1G), found in Bos taurus (Bovine).